A 454-amino-acid chain; its full sequence is Toxin CfTX-A (454 aa).

The signal sequence occupies residues 1-18 (MDYAFIVFLVCFVSGTLG). Positions 19–25 (NRRRAKR) are excised as a propeptide. Positions 27 to 61 (VDEVTSGINQLVNQLNNVQQDTAAIKSALEELKTE) form a coiled coil.

Belongs to the jellyfish toxin family. Type II subfamily. As to quaternary structure, oligomer. Post-translationally, contains 2 disulfide bonds. In terms of tissue distribution, nematocytes.

The protein resides in the secreted. It is found in the nematocyst. The protein localises to the target cell membrane. Functionally, the fraction containing this toxin and CfTX-A shows potent hemolytic activity. This fraction causes minor effects on the cardiovascular system of anesthetized rats (at 25 ug/kg), since it has no significant effects on heart rate but produces relatively small increases in mean arterial pressure. The chain is Toxin CfTX-A from Chironex fleckeri (Australian box jellyfish).